A 412-amino-acid chain; its full sequence is Sexual development regulator umv3 (412 aa).

A disordered region spans residues 1–197 (MSAQDDIDTG…PPLLSDLPRH (197 aa)). Polar residues-rich tracts occupy residues 73-93 (RANT…SASS) and 149-170 (RQSA…PGST). Residues 171 to 181 (ENERVRMHDQR) are compositionally biased toward basic and acidic residues. Residues 195–388 (PRHSTDNKTY…ARQGIQVPVR (194 aa)) form the Velvet domain.

This sequence belongs to the velvet family. VelC subfamily.

The protein localises to the nucleus. In terms of biological role, velvet-domain-containing protein not required for disease or sexual development on seedlings. The sequence is that of Sexual development regulator umv3 from Mycosarcoma maydis (Corn smut fungus).